The sequence spans 249 residues: 2,3-bisphosphoglycerate-dependent phosphoglycerate mutase (249 aa).

Substrate contacts are provided by residues arginine 9–asparagine 16, threonine 22–glycine 23, arginine 61, glutamate 88–tyrosine 91, lysine 99, arginine 115–arginine 116, and glycine 184–asparagine 185. Histidine 10 (tele-phosphohistidine intermediate) is an active-site residue. The active-site Proton donor/acceptor is glutamate 88.

It belongs to the phosphoglycerate mutase family. BPG-dependent PGAM subfamily. As to quaternary structure, homodimer.

It carries out the reaction (2R)-2-phosphoglycerate = (2R)-3-phosphoglycerate. It functions in the pathway carbohydrate degradation; glycolysis; pyruvate from D-glyceraldehyde 3-phosphate: step 3/5. Catalyzes the interconversion of 2-phosphoglycerate and 3-phosphoglycerate. The sequence is that of 2,3-bisphosphoglycerate-dependent phosphoglycerate mutase from Xanthomonas oryzae pv. oryzae (strain PXO99A).